We begin with the raw amino-acid sequence, 433 residues long: Steroid hormone receptor ERR2 (433 aa).

The disordered stretch occupies residues 1-38; the sequence is MSSDDRHLGSSCGSFIKTEPSSPSSGIDALSHHSPSGS. The span at 28–38 shows a compositional bias: low complexity; the sequence is DALSHHSPSGS. Positions 93 to 211 are interaction with NANOG; the sequence is YMLNAIPKRL…SPPAKKPLTK (119 aa). A DNA-binding region (nuclear receptor) is located at residues 100-186; it reads KRLCLVCGDI…RVRGGRQKYK (87 aa). 2 consecutive NR C4-type zinc fingers follow at residues 103–123 and 139–163; these read CLVC…CEAC and CPAT…FMKC. Residues 203–433 form an essential for ESRRB transcriptional activity and interaction with NCOA3 region; the sequence is PPAKKPLTKI…LFLEMLEAKV (231 aa). In terms of domain architecture, NR LBD spans 208 to 432; the sequence is PLTKIVSYLL…KLFLEMLEAK (225 aa).

Belongs to the nuclear hormone receptor family. NR3 subfamily. As to quaternary structure, binds DNA as a monomer. Interacts with NR0B1; represses ESRRB activity at the GATA6 promoter. Interacts with NANOG; reciprocally modulates their transcriptional activities and activates POU5F1 expression. Interacts with NCOA3; mediates the interaction between ESRRB and RNA polymerase II complexes and allows NCOA3 corecruitment to ESRRB, KLF4, NANOG, and SOX2 enhancer regions to trigger ESRRB-dependent gene activation involved in self-renewal and pluripotency. Interacts with KDM1A; co-occupes the core set of ESRRB targets including ELF5 and EOMES. Interacts with the multiprotein complex Integrator, at least composed of INTS1, INTS2, INTS3, INTS4, INTS5, INTS6, INTS7, INTS8, INTS9/RC74, INTS10, INTS11/CPSF3L and INTS12; ESRRB is probably not a core component of the integrator complex and associates to integrator via its interaction with INTS1 and INTS9; attracts the transcriptional machinery. Interacts with JARID2. Interacts with POU5F1; recruits ESRRB near the POU5F1-SOX2 element in the NANOG proximal promoter leading to activation of NANOG expression; the interaction is DNA independent. Interacts with NFE2L2; represses NFE2L2 transcriptional activity. Isoform 1 interacts with ESR1. Post-translationally, acetylated by PCAF/KAT2 (in vitro).

The protein resides in the nucleus. It localises to the cytoplasm. Its subcellular location is the chromosome. In terms of biological role, transcription factor that binds a canonical ESRRB recognition (ERRE) sequence 5'TCAAGGTCA-3' localized on promoter and enhancer of targets genes regulating their expression or their transcription activity. Plays a role, in a LIF-independent manner, in maintainance of self-renewal and pluripotency of embryonic and trophoblast stem cells through different signaling pathways including FGF signaling pathway and Wnt signaling pathways. Involved in morula development (2-16 cells embryos) by acting as a regulator at the 8-cell stage. Upon FGF signaling pathway activation, interacts with KDM1A by directly binding to enhancer site of ELF5 and EOMES and activating their transcription leading to self-renewal of trophoblast stem cells. Also regulates expression of multiple rod-specific genes and is required for survival of this cell type. Plays a role as transcription factor activator of GATA6, NR0B1, POU5F1 and PERM1. Plays a role as transcription factor repressor of NFE2L2 transcriptional activity and ESR1 transcriptional activity. During mitosis remains bound to a subset of interphase target genes, including pluripotency regulators, through the canonical ESRRB recognition (ERRE) sequence, leading to their transcriptional activation in early G1 phase. Can coassemble on structured DNA elements with other transcription factors like SOX2, POU5F1, KDM1A and NCOA3 to trigger ESRRB-dependent gene activation. This mechanism, in the case of SOX2 corecruitment prevents the embryonic stem cells (ESCs) to epiblast stem cells (EpiSC) transition through positive regulation of NR0B1 that inhibits the EpiSC transcriptional program. Also plays a role inner ear development by controlling expression of ion channels and transporters and in early placentation. Transcription factor that binds a canonical ESRRB recognition (ERRE) sequence 5'TCAAGGTCA-3' localized on promoter and enhancer of targets genes regulating their expression or their transcription activity. Positively regulates ESR1 transcriptional activity upon E2 stimulation. The sequence is that of Steroid hormone receptor ERR2 from Homo sapiens (Human).